A 121-amino-acid chain; its full sequence is Small ribosomal subunit protein uS13 (121 aa).

Positions 94 to 121 are disordered; that stretch reads DLPVRGQRTKTNARTRKGPRKSGVQLKK. Positions 100–121 are enriched in basic residues; sequence QRTKTNARTRKGPRKSGVQLKK.

It belongs to the universal ribosomal protein uS13 family. In terms of assembly, part of the 30S ribosomal subunit. Forms a loose heterodimer with protein S19. Forms two bridges to the 50S subunit in the 70S ribosome.

Its function is as follows. Located at the top of the head of the 30S subunit, it contacts several helices of the 16S rRNA. In the 70S ribosome it contacts the 23S rRNA (bridge B1a) and protein L5 of the 50S subunit (bridge B1b), connecting the 2 subunits; these bridges are implicated in subunit movement. Contacts the tRNAs in the A and P-sites. The protein is Small ribosomal subunit protein uS13 of Polynucleobacter necessarius subsp. necessarius (strain STIR1).